The primary structure comprises 264 residues: Mitochondrial distribution and morphology protein 12 (264 aa).

Positions 1 to 232 (MSFDINWNKI…WPSWINLDFN (232 aa)) constitute an SMP-LTD domain. A disordered region spans residues 240 to 264 (ESSSSAEESLPHRDDAQDFSADARA). The span at 248-264 (SLPHRDDAQDFSADARA) shows a compositional bias: basic and acidic residues.

It belongs to the MDM12 family. Component of the ER-mitochondria encounter structure (ERMES) or MDM complex, composed of MMM1, MDM10, MDM12 and MDM34. An MMM1 homodimer associates with one molecule of MDM12 on each side in a pairwise head-to-tail manner, and the SMP-LTD domains of MMM1 and MDM12 generate a continuous hydrophobic tunnel for phospholipid trafficking.

It is found in the mitochondrion outer membrane. It localises to the endoplasmic reticulum membrane. Component of the ERMES/MDM complex, which serves as a molecular tether to connect the endoplasmic reticulum (ER) and mitochondria. Components of this complex are involved in the control of mitochondrial shape and protein biogenesis, and function in nonvesicular lipid trafficking between the ER and mitochondria. MDM12 is required for the interaction of the ER-resident membrane protein MMM1 and the outer mitochondrial membrane-resident beta-barrel protein MDM10. The MDM12-MMM1 subcomplex functions in the major beta-barrel assembly pathway that is responsible for biogenesis of all mitochondrial outer membrane beta-barrel proteins, and acts in a late step after the SAM complex. The MDM10-MDM12-MMM1 subcomplex further acts in the TOM40-specific pathway after the action of the MDM12-MMM1 complex. Essential for establishing and maintaining the structure of mitochondria and maintenance of mtDNA nucleoids. The protein is Mitochondrial distribution and morphology protein 12 of Eremothecium gossypii (strain ATCC 10895 / CBS 109.51 / FGSC 9923 / NRRL Y-1056) (Yeast).